Reading from the N-terminus, the 404-residue chain is UPF0261 protein CTC_01794 (404 aa).

It belongs to the UPF0261 family.

The chain is UPF0261 protein CTC_01794 from Clostridium tetani (strain Massachusetts / E88).